The sequence spans 158 residues: MKILGIDPGSRNCGYAIIEANKGKNILIEAGLIKIKPNTLQYQITELCEGLDLIFKNHSFDEVAIEDIFFAYNPKTVLKLAQFRGALSLKILQIHGDFAEYTPLQVKKAVTGKAKATKEQVAFMVKRLLGLSKDIKPLDITDAIAVALTHAANLRVRV.

Active-site residues include Asp-7, Glu-66, and Asp-139. 3 residues coordinate Mg(2+): Asp-7, Glu-66, and Asp-139.

The protein belongs to the RuvC family. As to quaternary structure, homodimer which binds Holliday junction (HJ) DNA. The HJ becomes 2-fold symmetrical on binding to RuvC with unstacked arms; it has a different conformation from HJ DNA in complex with RuvA. In the full resolvosome a probable DNA-RuvA(4)-RuvB(12)-RuvC(2) complex forms which resolves the HJ. Mg(2+) serves as cofactor.

It is found in the cytoplasm. The enzyme catalyses Endonucleolytic cleavage at a junction such as a reciprocal single-stranded crossover between two homologous DNA duplexes (Holliday junction).. Functionally, the RuvA-RuvB-RuvC complex processes Holliday junction (HJ) DNA during genetic recombination and DNA repair. Endonuclease that resolves HJ intermediates. Cleaves cruciform DNA by making single-stranded nicks across the HJ at symmetrical positions within the homologous arms, yielding a 5'-phosphate and a 3'-hydroxyl group; requires a central core of homology in the junction. The consensus cleavage sequence is 5'-(A/T)TT(C/G)-3'. Cleavage occurs on the 3'-side of the TT dinucleotide at the point of strand exchange. HJ branch migration catalyzed by RuvA-RuvB allows RuvC to scan DNA until it finds its consensus sequence, where it cleaves and resolves the cruciform DNA. The sequence is that of Crossover junction endodeoxyribonuclease RuvC from Campylobacter jejuni subsp. jejuni serotype O:6 (strain 81116 / NCTC 11828).